A 642-amino-acid polypeptide reads, in one-letter code: Threonine--tRNA ligase (642 aa).

Positions 1 to 61 (MPAITLPDGS…AADAQVVFVT (61 aa)) constitute a TGS domain. A catalytic region spans residues 243–536 (DHRRLGKEMD…LIEQYAGRFP (294 aa)). Zn(2+) contacts are provided by C336, H387, and H513.

This sequence belongs to the class-II aminoacyl-tRNA synthetase family. As to quaternary structure, homodimer. It depends on Zn(2+) as a cofactor.

Its subcellular location is the cytoplasm. It carries out the reaction tRNA(Thr) + L-threonine + ATP = L-threonyl-tRNA(Thr) + AMP + diphosphate + H(+). Catalyzes the attachment of threonine to tRNA(Thr) in a two-step reaction: L-threonine is first activated by ATP to form Thr-AMP and then transferred to the acceptor end of tRNA(Thr). Also edits incorrectly charged L-seryl-tRNA(Thr). This chain is Threonine--tRNA ligase, found in Granulibacter bethesdensis (strain ATCC BAA-1260 / CGDNIH1).